The primary structure comprises 108 residues: UPF0145 protein THA_1434 (108 aa).

The protein belongs to the UPF0145 family.

The chain is UPF0145 protein THA_1434 from Thermosipho africanus (strain TCF52B).